The chain runs to 341 residues: Adenine deaminase (341 aa).

Residues His17, His19, and His197 each contribute to the Zn(2+) site. Glu200 acts as the Proton donor in catalysis. Position 278 (Asp278) interacts with Zn(2+). Asp279 contacts substrate.

The protein belongs to the metallo-dependent hydrolases superfamily. Adenosine and AMP deaminases family. Adenine deaminase type 2 subfamily. Zn(2+) serves as cofactor.

The enzyme catalyses adenine + H2O + H(+) = hypoxanthine + NH4(+). Catalyzes the hydrolytic deamination of adenine to hypoxanthine. Plays an important role in the purine salvage pathway and in nitrogen catabolism. This Chlorobium luteolum (strain DSM 273 / BCRC 81028 / 2530) (Pelodictyon luteolum) protein is Adenine deaminase.